The chain runs to 348 residues: NADH-quinone oxidoreductase subunit H 1 (348 aa).

The next 8 membrane-spanning stretches (helical) occupy residues Ile11–Val31, Phe83–Ile103, Val136–Gly156, Ser172–Leu192, Gly208–Ala228, Met268–Phe288, Leu289–Ile309, and Leu324–Val344.

It belongs to the complex I subunit 1 family. NDH-1 is composed of 14 different subunits. Subunits NuoA, H, J, K, L, M, N constitute the membrane sector of the complex.

The protein localises to the cell inner membrane. It catalyses the reaction a quinone + NADH + 5 H(+)(in) = a quinol + NAD(+) + 4 H(+)(out). Its function is as follows. NDH-1 shuttles electrons from NADH, via FMN and iron-sulfur (Fe-S) centers, to quinones in the respiratory chain. The immediate electron acceptor for the enzyme in this species is believed to be ubiquinone. Couples the redox reaction to proton translocation (for every two electrons transferred, four hydrogen ions are translocated across the cytoplasmic membrane), and thus conserves the redox energy in a proton gradient. This subunit may bind ubiquinone. The sequence is that of NADH-quinone oxidoreductase subunit H 1 from Geobacter sulfurreducens (strain ATCC 51573 / DSM 12127 / PCA).